A 132-amino-acid polypeptide reads, in one-letter code: Small ribosomal subunit protein uS8 (132 aa).

The protein belongs to the universal ribosomal protein uS8 family. In terms of assembly, part of the 30S ribosomal subunit. Contacts proteins S5 and S12.

In terms of biological role, one of the primary rRNA binding proteins, it binds directly to 16S rRNA central domain where it helps coordinate assembly of the platform of the 30S subunit. The polypeptide is Small ribosomal subunit protein uS8 (Latilactobacillus sakei subsp. sakei (strain 23K) (Lactobacillus sakei subsp. sakei)).